The chain runs to 273 residues: NADPH-dependent 7-cyano-7-deazaguanine reductase (273 aa).

81–83 provides a ligand contact to substrate; it reads VES. 83–84 is an NADPH binding site; sequence SK. Cys-179 serves as the catalytic Thioimide intermediate. Asp-186 acts as the Proton donor in catalysis. Residue 218–219 coordinates substrate; sequence AE. 247–248 contributes to the NADPH binding site; sequence RG.

Belongs to the GTP cyclohydrolase I family. QueF type 2 subfamily. As to quaternary structure, homodimer.

The protein localises to the cytoplasm. The catalysed reaction is 7-aminomethyl-7-carbaguanine + 2 NADP(+) = 7-cyano-7-deazaguanine + 2 NADPH + 3 H(+). It participates in tRNA modification; tRNA-queuosine biosynthesis. Its function is as follows. Catalyzes the NADPH-dependent reduction of 7-cyano-7-deazaguanine (preQ0) to 7-aminomethyl-7-deazaguanine (preQ1). This chain is NADPH-dependent 7-cyano-7-deazaguanine reductase, found in Rickettsia felis (strain ATCC VR-1525 / URRWXCal2) (Rickettsia azadi).